A 268-amino-acid chain; its full sequence is Embryonic abundant protein USP92 (268 aa).

The signal sequence occupies residues 1 to 22 (MEFAHLTVLSLFCLAFVGITAT). Tandem repeats lie at residues 50 to 55 (GKTNSL), 83 to 88 (GNTNSV), 101 to 106 (GVTDSI), 166 to 183 (YVVE…MCHR), and 202 to 222 (YVVS…VCHH). The tract at residues 50 to 106 (GKTNSLPIKSEELKQYSTLFFEHDLHPRKNFILGNTNSVGSIIRPFTKSRQGVTDSI) is 3 X 6 AA approximate repeats. Residues 68–259 (LFFEHDLHPR…GNKAAAWVPN (192 aa)) form the BURP domain. Residues 166–222 (YVVEDVKKVGDNAVMCHRLNFEKVVFNCHQVRETTAYVVSLVASDGTKTKALTVCHH) form a 2 X approximate repeats region. Asn-259 carries an N-linked (GlcNAc...) asparagine glycan.

In terms of tissue distribution, seed.

In Vicia faba (Broad bean), this protein is Embryonic abundant protein USP92.